The sequence spans 767 residues: 5-methyltetrahydropteroyltriglutamate--homocysteine methyltransferase (767 aa).

Residues Arg-17–Lys-20 and Lys-117 each bind 5-methyltetrahydropteroyltri-L-glutamate. L-homocysteine-binding positions include Ile-441–Ser-443 and Glu-494. L-methionine-binding positions include Ile-441 to Ser-443 and Glu-494. 5-methyltetrahydropteroyltri-L-glutamate contacts are provided by residues Arg-525–Cys-526 and Trp-571. Position 609 (Asp-609) interacts with L-homocysteine. Asp-609 contributes to the L-methionine binding site. Position 615 (Glu-615) interacts with 5-methyltetrahydropteroyltri-L-glutamate. 3 residues coordinate Zn(2+): His-652, Cys-654, and Glu-676. The active-site Proton donor is His-705. Cys-737 lines the Zn(2+) pocket.

This sequence belongs to the vitamin-B12 independent methionine synthase family. The cofactor is Zn(2+).

The catalysed reaction is 5-methyltetrahydropteroyltri-L-glutamate + L-homocysteine = tetrahydropteroyltri-L-glutamate + L-methionine. It participates in amino-acid biosynthesis; L-methionine biosynthesis via de novo pathway; L-methionine from L-homocysteine (MetE route): step 1/1. Catalyzes the transfer of a methyl group from 5-methyltetrahydrofolate to homocysteine resulting in methionine formation. The chain is 5-methyltetrahydropteroyltriglutamate--homocysteine methyltransferase from Bifidobacterium longum (strain NCC 2705).